Consider the following 360-residue polypeptide: Variable large protein 18 (360 aa).

An N-terminal signal peptide occupies residues 1–26 (MRKRISAIINKLNISIMMMIVVLMIG). Residue Cys27 is the site of N-palmitoyl cysteine attachment. Residue Cys27 is the site of S-diacylglycerol cysteine attachment.

This sequence belongs to the variable large protein (Vlp) family. Alpha subfamily.

The protein resides in the cell outer membrane. In terms of biological role, the Vlp and Vsp proteins are antigenically distinct proteins, only one vlp or vsp gene is transcriptionally active at any one time. Switching between these genes is a mechanism of host immune response evasion. This is Variable large protein 18 from Borrelia hermsii.